The chain runs to 397 residues: t-SNARE affecting a late Golgi compartment protein 2 (397 aa).

Topologically, residues M1–K317 are cytoplasmic. Residues D74–V96 are a coiled coil. S109 bears the Phosphoserine mark. A t-SNARE coiled-coil homology domain is found at E244–A306. A helical; Anchor for type IV membrane protein membrane pass occupies residues V318–H338. The Vesicular segment spans residues G339–L397. The disordered stretch occupies residues G341–L397. Residues N353–D374 show a composition bias toward basic and acidic residues. A compositionally biased stretch (acidic residues) spans T386–L397.

It belongs to the syntaxin family. Interacts with VPS45.

The protein resides in the golgi apparatus. Its subcellular location is the trans-Golgi network membrane. It localises to the endosome membrane. In terms of biological role, t-SNARE that functions in transport from the endosome to the late Golgi and on the endocytic pathway. The polypeptide is t-SNARE affecting a late Golgi compartment protein 2 (TLG2) (Saccharomyces cerevisiae (strain ATCC 204508 / S288c) (Baker's yeast)).